The primary structure comprises 552 residues: Putative transport protein YE4162 (552 aa).

6 helical membrane passes run 1–21 (MSAIALTVSMLALVAVLGLWI), 26–46 (VYGVGLGIGGVLFGGIIVGHF), 65–85 (FGLILFVYTIGIQVGPGFFSS), 96–116 (FAILMVIVGGLVTAIIHKLFA), 119–139 (LPIILGVFSGAVTNTPALGAA), and 158–178 (MGYAMAYPFGICGILLVMWLI). RCK C-terminal domains follow at residues 192 to 276 (EFDS…VVGE) and 279 to 361 (DVTL…VVGN). A run of 6 helical transmembrane segments spans residues 371–391 (MLPVFIGVGLGVLLGSIPLFI), 393–413 (GFPAALRLGLAGGPLVVALIL), 439–459 (IVLFLSVVGLKSGGDFINTLV), 464–484 (LAWIGYGAMITGIPLLTVGIL), 493–513 (YLTLCGMLAGSMTDPPALAFA), and 530–550 (VYPLAMFLRIMSPQILAVLFW).

This sequence belongs to the AAE transporter (TC 2.A.81) family. YidE subfamily.

It localises to the cell membrane. The protein is Putative transport protein YE4162 of Yersinia enterocolitica serotype O:8 / biotype 1B (strain NCTC 13174 / 8081).